The sequence spans 687 residues: UvrABC system protein C (687 aa).

A GIY-YIG domain is found at 16-95; it reads TEPGVYKFRD…IKKFDPHFNV (80 aa). Positions 208-243 constitute a UVR domain; sequence DSVVRRLTNEMISASEALDFEKAARKRDDLNAVRKI.

Belongs to the UvrC family. Interacts with UvrB in an incision complex.

The protein localises to the cytoplasm. Functionally, the UvrABC repair system catalyzes the recognition and processing of DNA lesions. UvrC both incises the 5' and 3' sides of the lesion. The N-terminal half is responsible for the 3' incision and the C-terminal half is responsible for the 5' incision. The sequence is that of UvrABC system protein C from Corynebacterium diphtheriae (strain ATCC 700971 / NCTC 13129 / Biotype gravis).